Reading from the N-terminus, the 429-residue chain is Adenylosuccinate synthetase (429 aa).

GTP contacts are provided by residues 12–18 (GDEGKGK) and 40–42 (GHT). Asp-13 functions as the Proton acceptor in the catalytic mechanism. Positions 13 and 40 each coordinate Mg(2+). IMP-binding positions include 13-16 (DEGK), 38-41 (NAGH), Thr-128, Arg-142, Gln-223, Thr-238, and Arg-302. Catalysis depends on His-41, which acts as the Proton donor. A substrate-binding site is contributed by 298 to 304 (TTTGRPR). GTP contacts are provided by residues Arg-304, 330–332 (SID), and 412–414 (SVG).

The protein belongs to the adenylosuccinate synthetase family. Homodimer. It depends on Mg(2+) as a cofactor.

It is found in the cytoplasm. It catalyses the reaction IMP + L-aspartate + GTP = N(6)-(1,2-dicarboxyethyl)-AMP + GDP + phosphate + 2 H(+). It functions in the pathway purine metabolism; AMP biosynthesis via de novo pathway; AMP from IMP: step 1/2. Functionally, plays an important role in the de novo pathway of purine nucleotide biosynthesis. Catalyzes the first committed step in the biosynthesis of AMP from IMP. The chain is Adenylosuccinate synthetase from Exiguobacterium sp. (strain ATCC BAA-1283 / AT1b).